Consider the following 492-residue polypeptide: Fascin-2 (492 aa).

This sequence belongs to the fascin family. Exclusively expressed in the eye, specifically in photoreceptor cells.

Its subcellular location is the cytoplasm. It is found in the cytoskeleton. The protein resides in the cell projection. The protein localises to the stereocilium. Acts as an actin bundling protein. May play a pivotal role in photoreceptor cell-specific events, such as disk morphogenesis. In Bos taurus (Bovine), this protein is Fascin-2 (FSCN2).